Reading from the N-terminus, the 414-residue chain is 2,3-diketo-5-methylthiopentyl-1-phosphate enolase (414 aa).

Catalysis depends on K99, which acts as the Proton acceptor. Substrate is bound by residues K148, 174–177 (KDDE), H265, G338, and 360–361 (GG). 3 residues coordinate Mg(2+): K174, D176, and E177. K174 carries the N6-carboxylysine modification.

Belongs to the RuBisCO large chain family. Type IV subfamily. Homodimer. Mg(2+) is required as a cofactor.

The enzyme catalyses 5-methylsulfanyl-2,3-dioxopentyl phosphate = 2-hydroxy-5-methylsulfanyl-3-oxopent-1-enyl phosphate. The protein operates within amino-acid biosynthesis; L-methionine biosynthesis via salvage pathway; L-methionine from S-methyl-5-thio-alpha-D-ribose 1-phosphate: step 3/6. Functionally, catalyzes the enolization of 2,3-diketo-5-methylthiopentyl-1-phosphate (DK-MTP-1-P) into 2-hydroxy-3-keto-5-methylthiopentenyl-1-phosphate (HK-MTPenyl-1-P). This chain is 2,3-diketo-5-methylthiopentyl-1-phosphate enolase, found in Bacillus cytotoxicus (strain DSM 22905 / CIP 110041 / 391-98 / NVH 391-98).